The primary structure comprises 282 residues: Phosphatidylserine decarboxylase proenzyme (282 aa).

Catalysis depends on charge relay system; for autoendoproteolytic cleavage activity residues aspartate 88, histidine 144, and serine 247. Serine 247 functions as the Schiff-base intermediate with substrate; via pyruvic acid; for decarboxylase activity in the catalytic mechanism. At serine 247 the chain carries Pyruvic acid (Ser); by autocatalysis.

This sequence belongs to the phosphatidylserine decarboxylase family. PSD-B subfamily. Prokaryotic type I sub-subfamily. In terms of assembly, heterodimer of a large membrane-associated beta subunit and a small pyruvoyl-containing alpha subunit. Requires pyruvate as cofactor. Is synthesized initially as an inactive proenzyme. Formation of the active enzyme involves a self-maturation process in which the active site pyruvoyl group is generated from an internal serine residue via an autocatalytic post-translational modification. Two non-identical subunits are generated from the proenzyme in this reaction, and the pyruvate is formed at the N-terminus of the alpha chain, which is derived from the carboxyl end of the proenzyme. The autoendoproteolytic cleavage occurs by a canonical serine protease mechanism, in which the side chain hydroxyl group of the serine supplies its oxygen atom to form the C-terminus of the beta chain, while the remainder of the serine residue undergoes an oxidative deamination to produce ammonia and the pyruvoyl prosthetic group on the alpha chain. During this reaction, the Ser that is part of the protease active site of the proenzyme becomes the pyruvoyl prosthetic group, which constitutes an essential element of the active site of the mature decarboxylase.

It is found in the cell membrane. It catalyses the reaction a 1,2-diacyl-sn-glycero-3-phospho-L-serine + H(+) = a 1,2-diacyl-sn-glycero-3-phosphoethanolamine + CO2. It participates in phospholipid metabolism; phosphatidylethanolamine biosynthesis; phosphatidylethanolamine from CDP-diacylglycerol: step 2/2. Catalyzes the formation of phosphatidylethanolamine (PtdEtn) from phosphatidylserine (PtdSer). The sequence is that of Phosphatidylserine decarboxylase proenzyme from Xanthomonas oryzae pv. oryzae (strain KACC10331 / KXO85).